The following is a 163-amino-acid chain: Ureidoglycolate lyase 2 (163 aa).

It belongs to the ureidoglycolate lyase family. As to quaternary structure, homodimer. Requires Ni(2+) as cofactor.

It carries out the reaction (S)-ureidoglycolate = urea + glyoxylate. It participates in nitrogen metabolism; (S)-allantoin degradation. Functionally, catalyzes the catabolism of the allantoin degradation intermediate (S)-ureidoglycolate, generating urea and glyoxylate. Involved in the utilization of allantoin as nitrogen source. The sequence is that of Ureidoglycolate lyase 2 from Rhizobium meliloti (strain 1021) (Ensifer meliloti).